The chain runs to 344 residues: Methionine synthase (344 aa).

4 residues coordinate Zn(2+): His-211, Cys-213, Glu-236, and Cys-315.

It belongs to the archaeal MetE family. Zn(2+) serves as cofactor.

The protein operates within amino-acid biosynthesis; L-methionine biosynthesis via de novo pathway. In terms of biological role, catalyzes the transfer of a methyl group to L-homocysteine resulting in methionine formation. The physiological methyl donor is unknown. The polypeptide is Methionine synthase (Thermoplasma volcanium (strain ATCC 51530 / DSM 4299 / JCM 9571 / NBRC 15438 / GSS1)).